The following is a 194-amino-acid chain: Potassium-transporting ATPase KdpC subunit (194 aa).

The chain crosses the membrane as a helical span at residues leucine 12–phenylalanine 34.

This sequence belongs to the KdpC family. As to quaternary structure, the system is composed of three essential subunits: KdpA, KdpB and KdpC.

It is found in the cell inner membrane. Its function is as follows. Part of the high-affinity ATP-driven potassium transport (or Kdp) system, which catalyzes the hydrolysis of ATP coupled with the electrogenic transport of potassium into the cytoplasm. This subunit acts as a catalytic chaperone that increases the ATP-binding affinity of the ATP-hydrolyzing subunit KdpB by the formation of a transient KdpB/KdpC/ATP ternary complex. The polypeptide is Potassium-transporting ATPase KdpC subunit (Salmonella schwarzengrund (strain CVM19633)).